The chain runs to 415 residues: Gamma-glutamyl phosphate reductase (415 aa).

This sequence belongs to the gamma-glutamyl phosphate reductase family.

It localises to the cytoplasm. The catalysed reaction is L-glutamate 5-semialdehyde + phosphate + NADP(+) = L-glutamyl 5-phosphate + NADPH + H(+). The protein operates within amino-acid biosynthesis; L-proline biosynthesis; L-glutamate 5-semialdehyde from L-glutamate: step 2/2. In terms of biological role, catalyzes the NADPH-dependent reduction of L-glutamate 5-phosphate into L-glutamate 5-semialdehyde and phosphate. The product spontaneously undergoes cyclization to form 1-pyrroline-5-carboxylate. The polypeptide is Gamma-glutamyl phosphate reductase (Clostridium perfringens (strain ATCC 13124 / DSM 756 / JCM 1290 / NCIMB 6125 / NCTC 8237 / Type A)).